A 536-amino-acid polypeptide reads, in one-letter code: MASSALNNLVAVNPNTLSPSPKSTPLPNTFSNLRRVSAFRPIKASLFGDSPIKIPGITSQPPPSSDETTLPIRQIPGDYGLPGIGPIQDRLDYFYNQGREEFFKSRLQKYKSTVYRANMPPGPFIASNPRVIVLLDAKSFPVLFDMSKVEKKDLFTGTYMPSTELTGGYRILSYLDPSEPNHTKLKQLLFNLIKNRRDYVIPEFSSSFTDLCEVVEYDLATKGKAAFNDPAEQAAFNFLSRAFFGVKPIDTPLGKDAPSLISKWVLFNLAPILSVGLPKEVEEATLHSVRLPPLLVQNDYHRLYEFFTSAAGSVLDEAEQSGISRDEACHNILFAVCFNSWGGFKILFPSLMKWIGRAGLELHTKLAQEIRSAIQSTGGGKVTMAAMEQMPLMKSVVYETLRIEPPVALQYGKAKKDFILESHEAAYQVKEGEMLFGYQPFATKDPKIFDRPEEFVADRFVGEGVKLMEYVMWSNGPETETPSVANKQCAGKDFVVMAARLFVVELFKRYDSFDIEVGTSSLGASITLTSLKRSTF.

The N-terminal 58 residues, 1-58 (MASSALNNLVAVNPNTLSPSPKSTPLPNTFSNLRRVSAFRPIKASLFGDSPIKIPGIT), are a transit peptide targeting the chloroplast. Lys151, His182, and Lys186 together coordinate heme b. 3 residues coordinate (13S)-hydroperoxy-(9Z,11E)-octadecadienoate: Ser262, Asn339, and Lys345. Residue Asn339 coordinates (13S)-hydroperoxy-(9Z,11E,15Z)-octadecatrienoate. Heme b is bound by residues Lys487 and Cys489.

It belongs to the cytochrome P450 family. Heme b serves as cofactor.

The protein localises to the plastid. The protein resides in the chloroplast. It carries out the reaction (13S)-hydroperoxy-(9Z,11E,15Z)-octadecatrienoate = (9Z,13S,15Z)-12,13-epoxyoctadeca-9,11,15-trienoate + H2O. The catalysed reaction is (13S)-hydroperoxy-(9Z,11E)-octadecadienoate = (9Z,13S)-12,13-epoxyoctadeca-9,11-dienoate + H2O. It participates in lipid metabolism; oxylipin biosynthesis. In terms of biological role, cytochrome P450 enzyme involved in the biosynthesis of oxylipin jasmonates, important phytohormones acting as growth regulators and signaling molecules for plant defense. Functions as an allene oxide synthase that converts hydroperoxy fatty acids to unstable allene epoxides. Catalyzes the dehydration of 13-HPOTE ((13S)-hydroperoxy-(9Z,11E,15Z)-octadecatrienoate), as well as 13-HPODE ((13S)-hydroperoxy-(9Z,11E)-octadecadienoate). The chain is Allene oxide synthase, chloroplastic (CYP74A) from Linum usitatissimum (Flax).